Consider the following 836-residue polypeptide: V-type proton ATPase subunit C (836 aa).

Residues 116–144 (LSLRHQRKHQHTHHQNKPQHYHHHHHHHQ) show a composition bias toward basic residues. Disordered stretches follow at residues 116-169 (LSLR…ASAP), 302-403 (APTT…SVQS), 415-453 (KPKR…QNHN), and 496-544 (PSQL…PLSP). Over residues 160 to 169 (ATPPAPASAP) the composition is skewed to pro residues. The span at 302 to 316 (APTTSSSVHSSMSRS) shows a compositional bias: low complexity. Polar residues-rich tracts occupy residues 319–348 (KRLN…HLAT) and 364–374 (TNPLQSPVQKS). Over residues 425–450 (AQQQHETAQLQHQQTTQQHATPLTPQ) the composition is skewed to low complexity. A compositionally biased stretch (polar residues) spans 496-511 (PSQLNINNGFNLTPTH). Residues 512–529 (RSSPVSSCCGSSSQGRSS) are compositionally biased toward low complexity.

It belongs to the V-ATPase C subunit family. In terms of assembly, V-ATPase is a heteromultimeric enzyme made up of two complexes: the ATP-hydrolytic V1 complex and the proton translocation V0 complex. The V1 complex consists of three catalytic AB heterodimers that form a heterohexamer, three peripheral stalks each consisting of EG heterodimers, one central rotor including subunits D and F, and the regulatory subunits C and H. The proton translocation complex V0 consists of the proton transport subunit a, a ring of proteolipid subunits c9c'', rotary subunit d, subunits e and f, and the accessory subunits VhaAC45 and ATP6AP2. In larvae, expressed in the ring gland, CNS, imaginal disks and lymph gland.

Functionally, subunit of the V1 complex of vacuolar(H+)-ATPase (V-ATPase), a multisubunit enzyme composed of a peripheral complex (V1) that hydrolyzes ATP and a membrane integral complex (V0) that translocates protons. V-ATPase is responsible for acidifying and maintaining the pH of intracellular compartments and in some cell types, is targeted to the plasma membrane, where it is responsible for acidifying the extracellular environment. Subunit C is necessary for the assembly of the catalytic sector of the enzyme and is likely to have a specific function in its catalytic activity. In enterocytes, acts as part of a pHCl-2 sensory pathway which mediates Tor-dependent larval growth and metabolism in response to zinc availability. Likely acts in maintaining enterocyte lysosomal acidification which consequently promotes Tor activation at the lysosome membrane. The polypeptide is V-type proton ATPase subunit C (Vha44) (Drosophila melanogaster (Fruit fly)).